Here is a 197-residue protein sequence, read N- to C-terminus: 7-methyl-GTP pyrophosphatase (197 aa).

Catalysis depends on D72, which acts as the Proton acceptor.

Belongs to the Maf family. YceF subfamily. It depends on a divalent metal cation as a cofactor.

The protein localises to the cytoplasm. The catalysed reaction is N(7)-methyl-GTP + H2O = N(7)-methyl-GMP + diphosphate + H(+). In terms of biological role, nucleoside triphosphate pyrophosphatase that hydrolyzes 7-methyl-GTP (m(7)GTP). May have a dual role in cell division arrest and in preventing the incorporation of modified nucleotides into cellular nucleic acids. In Bordetella avium (strain 197N), this protein is 7-methyl-GTP pyrophosphatase.